A 106-amino-acid chain; its full sequence is CLAVATA3/ESR (CLE)-related protein 21 (106 aa).

A signal peptide spans 1–31 (MLILSSRYAMKRDVLIIVIFTVLVLIIISRS). A glycan (N-linked (GlcNAc...) asparagine) is linked at N47. A compositionally biased stretch (basic residues) spans 72–82 (KVRRRSSRFRR). The segment at 72–106 (KVRRRSSRFRRKTDGDEEEEEKRSIPTGPNPLHNK) is disordered. Hydroxyproline is present on residues P97 and P100. An O-linked (Ara...) hydroxyproline glycan is attached at P100.

This sequence belongs to the CLV3/ESR signal peptide family. The O-glycosylation (arabinosylation) of the hydroxyproline Pro-100 enhances binding affinity of the CLE21p peptide for its receptor. As to expression, mostly expressed in leaves and apex, and, to a lower extent, in seedlings, flowers, stems and siliques.

The protein localises to the secreted. It localises to the extracellular space. In terms of biological role, extracellular signal peptide that regulates cell fate. Represses root apical meristem maintenance. Regulates the transition of protophloem cells from proliferation to differentiation, thus impinging on postembryonic growth capacity of the root meristem; this signaling pathway requires CRN and CLV2. The chain is CLAVATA3/ESR (CLE)-related protein 21 from Arabidopsis thaliana (Mouse-ear cress).